Consider the following 328-residue polypeptide: Lytic polysaccharide monooxygenase aasB (328 aa).

A signal peptide spans 1–18; that stretch reads MKAFFAISASTLLATVHG. Cu(2+) is bound at residue H19. A disulfide bridge links C40 with C43. N-linked (GlcNAc...) asparagine glycosylation is present at N54. Intrachain disulfides connect C66-C245, C102-C203, C118-C145, C153-C161, C167-C173, and C181-C192. H109 provides a ligand contact to Cu(2+). Y242 is a Cu(2+) binding site. N-linked (GlcNAc...) asparagine glycosylation occurs at N306.

The protein belongs to the polysaccharide monooxygenase AA13 family. Cu(2+) serves as cofactor.

The protein localises to the secreted. It carries out the reaction starch + reduced acceptor + O2 = D-glucono-1,5-lactone-terminated malto-oligosaccharides + short-chain malto-oligosaccharides + acceptor + H2O.. Its function is as follows. Lytic polysaccharide monooxygenase involved in breakdown of granular resistant starch. In Emericella nidulans (strain FGSC A4 / ATCC 38163 / CBS 112.46 / NRRL 194 / M139) (Aspergillus nidulans), this protein is Lytic polysaccharide monooxygenase aasB.